The sequence spans 346 residues: uncharacterized protein (346 aa).

8 consecutive transmembrane segments (helical) span residues 15-35 (YLRG…LLTV), 55-75 (VEAR…YLFI), 93-113 (ILVL…EALT), 139-159 (ILLL…PLIL), 182-202 (IFTF…YCYV), 229-249 (LGVA…LLLL), 269-289 (LTNY…FHLF), and 295-315 (LQSL…SAMW).

To E.coli YeiB, B.subtilis YxaH and B.subtilis YrkO.

It localises to the cell membrane. In terms of biological role, involved in transport. This is an uncharacterized protein from Bacillus acidopullulyticus.